The chain runs to 274 residues: HTH-type transcriptional regulator GadX (274 aa).

The HTH araC/xylS-type domain maps to 145–242 (TRVCTVINNN…GMTPTEYQER (98 aa)). 2 consecutive DNA-binding regions (H-T-H motif) follow at residues 162 to 183 (ARIA…REEG) and 209 to 232 (IKRV…RNYY).

Homodimer.

Its function is as follows. Positively regulates the expression of about fifteen genes involved in acid resistance such as gadA, gadB and gadC. Depending on the conditions (growth phase and medium), can repress gadW. Negatively regulates perA expression in acidic conditions and positively regulates it in alkaline conditions. The chain is HTH-type transcriptional regulator GadX (gadX) from Escherichia coli O127:H6 (strain E2348/69 / EPEC).